We begin with the raw amino-acid sequence, 167 residues long: MVSNFFHVIQVFEKSATLISKTEHIGFVIYSWRKSTTHLGSRRKFAISIYLSEVSLQKYDCPFSGTSFVVFSLFLICAMAGDVVYADIKTVRTSPLELAFPLQRSVSFNFSTVHKSCPAKDWKVHKGKCYWIAETKKSWNKSQNDCAINNSYLMVIQDITAMVRFNI.

The Cytoplasmic segment spans residues 1–67 (MVSNFFHVIQ…KYDCPFSGTS (67 aa)). The helical; Signal-anchor for type II membrane protein transmembrane segment at 68–88 (FVVFSLFLICAMAGDVVYADI) threads the bilayer. The Extracellular portion of the chain corresponds to 89–167 (KTVRTSPLEL…DITAMVRFNI (79 aa)). Asn-109, Asn-140, and Asn-149 each carry an N-linked (GlcNAc...) asparagine glycan. Residues 116–167 (SCPAKDWKVHKGKCYWIAETKKSWNKSQNDCAINNSYLMVIQDITAMVRFNI) form the C-type lectin; atypical domain.

Expressed in spleen, lymph node, and tonsil. Lower expression in peripheral blood, bone marrow, and colon. No expression detected in thymus. Highly expressed in dendritic and B-cells.

The protein localises to the cell membrane. Functionally, may function in mediating immune cell-cell interactions. May act as a T-cell costimulatory molecule, enhancing anti-CD3-induced proliferation. May play a role in the interaction of dendritic cells with T-cells and the cells of the adaptive immune response. The protein is Putative C-type lectin-like domain family 1 of Homo sapiens (Human).